Reading from the N-terminus, the 68-residue chain is Pleurocidin-like peptide WF4 (68 aa).

A signal peptide spans 1-22; that stretch reads MKFTATFLMMFIFVLMVEPGEC. Residues 48-68 constitute a propeptide that is removed on maturation; the sequence is GEQQDLDKRAVDEDPNVIVFE.

This sequence belongs to the pleurocidin family.

It localises to the secreted. Functionally, antimicrobial peptide. The chain is Pleurocidin-like peptide WF4 (ple4) from Pseudopleuronectes americanus (Winter flounder).